The sequence spans 301 residues: Ribonuclease Z (301 aa).

Zn(2+)-binding residues include His60, His62, Asp64, His65, His137, Asp207, and His265. Asp64 acts as the Proton acceptor in catalysis.

This sequence belongs to the RNase Z family. As to quaternary structure, homodimer. It depends on Zn(2+) as a cofactor.

The catalysed reaction is Endonucleolytic cleavage of RNA, removing extra 3' nucleotides from tRNA precursor, generating 3' termini of tRNAs. A 3'-hydroxy group is left at the tRNA terminus and a 5'-phosphoryl group is left at the trailer molecule.. Zinc phosphodiesterase, which displays some tRNA 3'-processing endonuclease activity. Probably involved in tRNA maturation, by removing a 3'-trailer from precursor tRNA. This chain is Ribonuclease Z, found in Exiguobacterium sibiricum (strain DSM 17290 / CCUG 55495 / CIP 109462 / JCM 13490 / 255-15).